A 633-amino-acid chain; its full sequence is Carbon catabolite-derepressing protein kinase (633 aa).

The segment covering 1–16 has biased composition (low complexity); sequence MSSNNNTNTAPANANS. Positions 1–46 are disordered; that stretch reads MSSNNNTNTAPANANSSHHHHHHHHHHHHHGHGGSNSTLNNPKSSL. Over residues 17–32 the composition is skewed to basic residues; that stretch reads SHHHHHHHHHHHHHGH. The 252-residue stretch at 55 to 306 folds into the Protein kinase domain; sequence YQIVKTLGEG…IHEIMQDDWF (252 aa). Residues 61-69 and K84 each bind ATP; that span reads LGEGSFGKV. The active-site Proton acceptor is the D177. Phosphothreonine; by autocatalysis is present on T210. The tract at residues 313-392 is auto-inhibitory domain (AID); sequence YLLPPDLKPH…YMLIKENKSL (80 aa). Positions 317–345 are disordered; it reads PDLKPHPEEENENNDSKKDGSSPDNDEID. Over residues 319 to 337 the composition is skewed to basic and acidic residues; that stretch reads LKPHPEEENENNDSKKDGS. The region spanning 348–389 is the UBA domain; the sequence is LVNILSSTMGYEKDEIYESLESSEDTPAFNEIRDAYMLIKEN. Residues 409–434 are disordered; it reads FLSQSPPTFQQQSKSHQKSQVDHETA. S413 is subject to Phosphoserine. K461 participates in a covalent cross-link: Glycyl lysine isopeptide (Lys-Gly) (interchain with G-Cter in ubiquitin). At S487 the chain carries Phosphoserine. Residue K549 forms a Glycyl lysine isopeptide (Lys-Gly) (interchain with G-Cter in SUMO) linkage. The residue at position 632 (S632) is a Phosphoserine.

The protein belongs to the protein kinase superfamily. CAMK Ser/Thr protein kinase family. SNF1 subfamily. Component of the AMP-activated protein kinase complex also known as the SNF1 kinase complex (Snf1c), a heterotrimeric complex composed of an alpha subunit (SNF1), a regulatory subunit beta (GAL83 and substoichiometric alternate beta subunits SIP1 and SIP2), and a regulatory subunit gamma (SNF4). Interacts with the transcriptional activator SIP4. Interacts with SAK1. Interacts with CTK1: Interacts with adenylate cyclase CYR1. Post-translationally, phosphorylation at Thr-210 in response to glucose limitation leads to activation of kinase activity. ADP, but not AMP, protects the enzyme from dephosphorylation at Thr-210 by GLC7. In terms of processing, sumoylation by the SUMO (E3) ligase MMS21 leads to inhibition by interaction of SUMO attached to Lys-549 with a SUMO-interacting sequence motif located near the active site of SNF1, and by targeting SNF1 for glucose-induced destruction via the SLX5-SLX8 (SUMO-directed) ubiquitin ligase.

The protein resides in the cytoplasm. It localises to the nucleus. The protein localises to the nucleus membrane. It catalyses the reaction L-seryl-[protein] + ATP = O-phospho-L-seryl-[protein] + ADP + H(+). The catalysed reaction is L-threonyl-[protein] + ATP = O-phospho-L-threonyl-[protein] + ADP + H(+). Its activity is regulated as follows. The kinase activity is positively regulated by SNF4 via sequestration of the SNF1 auto-inhibitory domain (AID). Its function is as follows. Serine/threonine protein kinase essential for release from glucose repression. Catalytic subunit of the AMP-activated protein kinase complex also known as the SNF1 kinase complex (Snf1c), a central regulator of cellular energy homeostasis, which, in response to a fall in intracellular ATP levels, activates energy-producing pathways and inhibits energy-consuming processes. The complex phosphorylates histone H3 to form H3S10ph, which promotes H3K14ac formation, leading to transcriptional activation through TBP recruitment to the promoters. The complex also negatively regulates the HOG1 MAPK pathway in ER stress response including unfolded protein response (UPR). Under nutrient/energy depletion, the complex phosphorylates and activates PAS kinase PSK1 which in turn activates PBS1, leading to the inhibition of the TORC1 signaling pathway. SNF1 also interacts and phosphorylates adenylate cyclase CYR1 and negatively regulates the protein kinase A signaling pathway. Also phosphorylates and regulates the transcriptional activator CAT8. This chain is Carbon catabolite-derepressing protein kinase, found in Saccharomyces cerevisiae (strain ATCC 204508 / S288c) (Baker's yeast).